A 93-amino-acid chain; its full sequence is Large ribosomal subunit protein uL23c (93 aa).

It belongs to the universal ribosomal protein uL23 family. In terms of assembly, part of the 50S ribosomal subunit.

The protein resides in the plastid. Its subcellular location is the chloroplast. In terms of biological role, binds to 23S rRNA. The sequence is that of Large ribosomal subunit protein uL23c (rpl23) from Fragaria ananassa (Strawberry).